The primary structure comprises 243 residues: 1-(5-phosphoribosyl)-5-[(5-phosphoribosylamino)methylideneamino] imidazole-4-carboxamide isomerase (243 aa).

Asp-8 functions as the Proton acceptor in the catalytic mechanism. The Proton donor role is filled by Asp-128.

This sequence belongs to the HisA/HisF family.

The protein resides in the cytoplasm. It catalyses the reaction 1-(5-phospho-beta-D-ribosyl)-5-[(5-phospho-beta-D-ribosylamino)methylideneamino]imidazole-4-carboxamide = 5-[(5-phospho-1-deoxy-D-ribulos-1-ylimino)methylamino]-1-(5-phospho-beta-D-ribosyl)imidazole-4-carboxamide. Its pathway is amino-acid biosynthesis; L-histidine biosynthesis; L-histidine from 5-phospho-alpha-D-ribose 1-diphosphate: step 4/9. The sequence is that of 1-(5-phosphoribosyl)-5-[(5-phosphoribosylamino)methylideneamino] imidazole-4-carboxamide isomerase from Opitutus terrae (strain DSM 11246 / JCM 15787 / PB90-1).